The sequence spans 202 residues: Indolepyruvate oxidoreductase subunit IorB (202 aa).

As to quaternary structure, heterodimer of the IorA and IorB subunits.

It catalyses the reaction indole-3-pyruvate + 2 oxidized [2Fe-2S]-[ferredoxin] + CoA = (indol-3-yl)acetyl-CoA + 2 reduced [2Fe-2S]-[ferredoxin] + CO2 + H(+). Its function is as follows. Catalyzes the ferredoxin-dependent oxidative decarboxylation of arylpyruvates. This is Indolepyruvate oxidoreductase subunit IorB (iorB) from Thermococcus kodakarensis (strain ATCC BAA-918 / JCM 12380 / KOD1) (Pyrococcus kodakaraensis (strain KOD1)).